Here is a 202-residue protein sequence, read N- to C-terminus: MSDFIVGLTGGIASGKSALAAEFEKLGVPVVDADLVARQVVAPGPVLDAIVAQFGAEVLLTDGTLDRQTLRQRVFADTAQRRVLEAITHPAIRSELQRAALAALAPYAIVAIPLLTEAGGRAGYPWLDRILVVDVPVALQHQRLMQRDAATAELADRMIAAQATREQRLAIADDVVCNDGVLEQLTQATHRLDADYRARSDR.

Positions 5–202 constitute a DPCK domain; sequence IVGLTGGIAS…DADYRARSDR (198 aa). 13 to 18 is a binding site for ATP; it reads ASGKSA.

Belongs to the CoaE family.

The protein localises to the cytoplasm. It carries out the reaction 3'-dephospho-CoA + ATP = ADP + CoA + H(+). It functions in the pathway cofactor biosynthesis; coenzyme A biosynthesis; CoA from (R)-pantothenate: step 5/5. Its function is as follows. Catalyzes the phosphorylation of the 3'-hydroxyl group of dephosphocoenzyme A to form coenzyme A. The chain is Dephospho-CoA kinase from Xanthomonas oryzae pv. oryzae (strain MAFF 311018).